Consider the following 33-residue polypeptide: Toxin Bcg III 25.52 (33 aa).

Cysteine 6 and cysteine 28 are oxidised to a cystine.

It localises to the secreted. The protein resides in the nematocyst. In Bunodosoma cangicum (Sea anemone), this protein is Toxin Bcg III 25.52.